The chain runs to 574 residues: uncharacterized protein (574 aa).

The segment at 297-317 is disordered; that stretch reads SAASKPRKRKKDEVSGAQVNS.

This is an uncharacterized protein from Mus musculus (Mouse).